Consider the following 396-residue polypeptide: Succinyl-diaminopimelate desuccinylase (396 aa).

His-74 contributes to the Zn(2+) binding site. Asp-76 is a catalytic residue. Residue Asp-107 participates in Zn(2+) binding. Glu-142 acts as the Proton acceptor in catalysis. Glu-143, Glu-171, and His-360 together coordinate Zn(2+).

Belongs to the peptidase M20A family. DapE subfamily. As to quaternary structure, homodimer. It depends on Zn(2+) as a cofactor. Requires Co(2+) as cofactor.

It carries out the reaction N-succinyl-(2S,6S)-2,6-diaminopimelate + H2O = (2S,6S)-2,6-diaminopimelate + succinate. It participates in amino-acid biosynthesis; L-lysine biosynthesis via DAP pathway; LL-2,6-diaminopimelate from (S)-tetrahydrodipicolinate (succinylase route): step 3/3. In terms of biological role, catalyzes the hydrolysis of N-succinyl-L,L-diaminopimelic acid (SDAP), forming succinate and LL-2,6-diaminopimelate (DAP), an intermediate involved in the bacterial biosynthesis of lysine and meso-diaminopimelic acid, an essential component of bacterial cell walls. This Methylobacterium sp. (strain 4-46) protein is Succinyl-diaminopimelate desuccinylase.